A 242-amino-acid polypeptide reads, in one-letter code: Large ribosomal subunit protein uL1 (242 aa).

Belongs to the universal ribosomal protein uL1 family. Part of the 50S ribosomal subunit.

In terms of biological role, binds directly to 23S rRNA. The L1 stalk is quite mobile in the ribosome, and is involved in E site tRNA release. Protein L1 is also a translational repressor protein, it controls the translation of the L11 operon by binding to its mRNA. The protein is Large ribosomal subunit protein uL1 of Kitasatospora aureofaciens (Streptomyces aureofaciens).